A 214-amino-acid chain; its full sequence is Intermembrane phospholipid transport system binding protein MlaC (214 aa).

Residues 1–28 (MNLIQLKKWFTILTFVLTAFLVTRTAIA) form the signal peptide.

The protein belongs to the MlaC/ttg2D family.

It localises to the periplasm. Its function is as follows. Involved in a phospholipid transport pathway that maintains lipid asymmetry in the outer membrane by retrograde trafficking of phospholipids from the outer membrane to the inner membrane. May transfer phospholipid across the periplasmic space and deliver it to the MlaFEDB complex at the inner membrane. The polypeptide is Intermembrane phospholipid transport system binding protein MlaC (Haemophilus influenzae (strain ATCC 51907 / DSM 11121 / KW20 / Rd)).